The chain runs to 631 residues: ATP-dependent zinc metalloprotease FtsH (631 aa).

Topologically, residues 1-2 (MK) are stromal. Residues 3 to 23 (ISWKNILLTLIPLGLISFLVW) traverse the membrane as a helical segment. At 24–118 (QGFNNTTNPQ…AHATNDSTPA (95 aa)) the chain is on the lumenal side. A helical membrane pass occupies residues 119 to 139 (WSLIGNLIFPILLIAGLAFLF). At 140–631 (RRSSNLPGGP…IDYKSQLKST (492 aa)) the chain is on the stromal side. An ATP-binding site is contributed by 213 to 220 (GPPGTGKT). His-434 serves as a coordination point for Zn(2+). Glu-435 is an active-site residue. Zn(2+) contacts are provided by His-438 and Asp-512.

It in the central section; belongs to the AAA ATPase family. The protein in the C-terminal section; belongs to the peptidase M41 family. In terms of assembly, homohexamer. Zn(2+) is required as a cofactor.

It localises to the plastid. It is found in the chloroplast thylakoid membrane. In terms of biological role, acts as a processive, ATP-dependent zinc metallopeptidase. The polypeptide is ATP-dependent zinc metalloprotease FtsH (Guillardia theta (Cryptophyte)).